Here is a 283-residue protein sequence, read N- to C-terminus: uncharacterized protein (283 aa).

The region spanning 3–79 (TGGLAIIQSM…MRVAGDLAKP (77 aa)) is the HTH rpiR-type domain. The H-T-H motif DNA-binding region spans 39 to 58 (VNEISALANSSDAAVIRLCK). One can recognise an SIS domain in the interval 123-264 (AVSLLLKAHT…FLGMAAEQYE (142 aa)).

This is an uncharacterized protein from Bacillus subtilis (strain 168).